The sequence spans 428 residues: Cytochrome c biogenesis protein CcsB (428 aa).

3 helical membrane-spanning segments follow: residues Leu14 to Ile34, Ser72 to Arg92, and Ile162 to Ser182.

The protein belongs to the Ccs1/CcsB family. In terms of assembly, may interact with CcsA.

Its subcellular location is the cellular thylakoid membrane. Functionally, required during biogenesis of c-type cytochromes (cytochrome c6 and cytochrome f) at the step of heme attachment. This chain is Cytochrome c biogenesis protein CcsB, found in Prochlorococcus marinus (strain MIT 9301).